The chain runs to 299 residues: Regucalcin (299 aa).

Residue E18 participates in a divalent metal cation binding. Substrate-binding residues include R101, N103, and E121. A divalent metal cation contacts are provided by N154 and D204. D204 functions as the Proton donor/acceptor in the catalytic mechanism.

It belongs to the SMP-30/CGR1 family. The cofactor is Zn(2+). Mn(2+) is required as a cofactor. Requires Ca(2+) as cofactor. It depends on Mg(2+) as a cofactor. Expressed in the liver, and in the pronephros from the late tadpole stage.

Its subcellular location is the cytoplasm. The enzyme catalyses D-glucono-1,5-lactone + H2O = D-gluconate + H(+). It participates in cofactor biosynthesis; L-ascorbate biosynthesis via UDP-alpha-D-glucuronate pathway; L-ascorbate from UDP-alpha-D-glucuronate: step 3/4. Gluconolactonase with low activity towards other sugar lactones, including gulonolactone and galactonolactone. Catalyzes a key step in ascorbic acid (vitamin C) biosynthesis. Can also hydrolyze diisopropyl phosphorofluoridate and phenylacetate (in vitro). Calcium-binding protein. Modulates Ca(2+) signaling, and Ca(2+)-dependent cellular processes and enzyme activities. The chain is Regucalcin from Xenopus laevis (African clawed frog).